The chain runs to 35 residues: Sperm protamine alpha isoform 1 (35 aa).

The disordered stretch occupies residues 1–35 (MPRRRRRASRPVRRRRRARRSTAVRRRRRVVRRRR). Phosphoserine is present on residues Ser9 and Ser21.

Phosphorylated in immature sperm. Dephosphorylated in mature sperm allowing a stronger interaction with DNA. As to expression, gonads.

Its subcellular location is the nucleus. It localises to the chromosome. Protamines substitute for histones in the chromatin of sperm during the haploid phase of spermatogenesis. They compact sperm DNA into a highly condensed, stable and inactive complex. The chain is Sperm protamine alpha isoform 1 from Scomber scombrus (Atlantic mackerel).